We begin with the raw amino-acid sequence, 324 residues long: Glyoxylate/hydroxypyruvate reductase B (324 aa).

Residues Arg-237 and Glu-266 contribute to the active site. His-285 acts as the Proton donor in catalysis.

The protein belongs to the D-isomer specific 2-hydroxyacid dehydrogenase family. GhrB subfamily. Homodimer.

It is found in the cytoplasm. The enzyme catalyses glycolate + NADP(+) = glyoxylate + NADPH + H(+). It catalyses the reaction (R)-glycerate + NAD(+) = 3-hydroxypyruvate + NADH + H(+). The catalysed reaction is (R)-glycerate + NADP(+) = 3-hydroxypyruvate + NADPH + H(+). Functionally, catalyzes the NADPH-dependent reduction of glyoxylate and hydroxypyruvate into glycolate and glycerate, respectively. The sequence is that of Glyoxylate/hydroxypyruvate reductase B from Salmonella gallinarum (strain 287/91 / NCTC 13346).